The sequence spans 720 residues: Denticleless protein homolog (720 aa).

WD repeat units follow at residues 43–85 (GMPV…TTKL), 92–131 (AHSN…LLGI), and 134–174 (GHQC…KDGF). Positions 164-167 (WDTR) match the DDB1-binding motif motif. Residues 193-200 (PSKLRKKR) carry the Nuclear localization signal motif. 4 WD repeats span residues 211–250 (DFQQ…AAYR), 266–305 (TRKL…TFPV), 310–351 (GHQN…LPPR), and 355–395 (GHSQ…EEEK). The DDB1-binding motif motif lies at 240 to 243 (WDLR). Disordered regions lie at residues 411-437 (KPEE…VGSP), 476-495 (PAKL…PSSK), 528-552 (QSLL…KRRL), and 607-698 (NEHE…TSPK). Polar residues predominate over residues 528-542 (QSLLETSSTPKAQHS). Basic and acidic residues-rich tracts occupy residues 543 to 552 (QAEKRAKRRL) and 642 to 660 (CERD…ERKN).

This sequence belongs to the WD repeat cdt2 family. In terms of assembly, component of the DCX(DTL) E3 ubiquitin ligase complex, at least composed of CUL4 (CUL4A or CUL4B), DDB1, DTL/CDT2 and RBX1.

The protein localises to the nucleus. Its subcellular location is the cytoplasm. The protein resides in the cytoskeleton. It is found in the microtubule organizing center. It localises to the centrosome. The protein localises to the chromosome. It participates in protein modification; protein ubiquitination. Substrate-specific adapter of a DCX (DDB1-CUL4-X-box) E3 ubiquitin-protein ligase complex required for cell cycle control, DNA damage response and translesion DNA synthesis. The DCX(DTL) complex, also named CRL4(CDT2) complex, mediates the polyubiquitination and subsequent degradation of CDT1, CDKN1A/p21(CIP1), KMT5A and SDE2. CDT1 degradation in response to DNA damage is necessary to ensure proper cell cycle regulation of DNA replication. CDKN1A/p21(CIP1) degradation during S phase or following UV irradiation is essential to control replication licensing. KMT5A degradation is also important for a proper regulation of mechanisms such as TGF-beta signaling, cell cycle progression, DNA repair and cell migration. Most substrates require their interaction with PCNA for their polyubiquitination: substrates interact with PCNA via their PIP-box, and those containing the 'K+4' motif in the PIP box, recruit the DCX(DTL) complex, leading to their degradation. In undamaged proliferating cells, the DCX(DTL) complex also promotes the 'Lys-164' monoubiquitination of PCNA, thereby being involved in PCNA-dependent translesion DNA synthesis. May play a role in the regulation of the circadian clock. This chain is Denticleless protein homolog (DTL), found in Gallus gallus (Chicken).